Consider the following 396-residue polypeptide: Stearoyl-[acyl-carrier-protein] 9-desaturase, chloroplastic (396 aa).

Residues 1 to 32 (MALKLNPVTTFPSTRSLNNFSSRSPRTFLMAA) constitute a chloroplast transit peptide. Fe cation-binding residues include Glu-138, Glu-176, His-179, Glu-229, Glu-262, and His-265.

The protein belongs to the fatty acid desaturase type 2 family. In terms of assembly, homodimer. Requires Fe(2+) as cofactor.

It is found in the plastid. It localises to the chloroplast. It catalyses the reaction octadecanoyl-[ACP] + 2 reduced [2Fe-2S]-[ferredoxin] + O2 + 2 H(+) = (9Z)-octadecenoyl-[ACP] + 2 oxidized [2Fe-2S]-[ferredoxin] + 2 H2O. It functions in the pathway lipid metabolism; fatty acid metabolism. In terms of biological role, converts stearoyl-ACP to oleoyl-ACP by introduction of a cis double bond between carbons 9 and 10 of the acyl chain. The protein is Stearoyl-[acyl-carrier-protein] 9-desaturase, chloroplastic of Linum usitatissimum (Flax).